We begin with the raw amino-acid sequence, 157 residues long: 2-C-methyl-D-erythritol 2,4-cyclodiphosphate synthase (157 aa).

A divalent metal cation-binding residues include aspartate 8 and histidine 10. 4-CDP-2-C-methyl-D-erythritol 2-phosphate is bound by residues 8 to 10 and 34 to 35; these read DVH and HS. Histidine 42 provides a ligand contact to a divalent metal cation. 4-CDP-2-C-methyl-D-erythritol 2-phosphate-binding positions include 56 to 58, 61 to 65, 100 to 106, 132 to 135, phenylalanine 139, and arginine 142; these read DIG, FPDTD, AQAPKMA, and TTTE.

This sequence belongs to the IspF family. As to quaternary structure, homotrimer. A divalent metal cation is required as a cofactor.

The catalysed reaction is 4-CDP-2-C-methyl-D-erythritol 2-phosphate = 2-C-methyl-D-erythritol 2,4-cyclic diphosphate + CMP. It participates in isoprenoid biosynthesis; isopentenyl diphosphate biosynthesis via DXP pathway; isopentenyl diphosphate from 1-deoxy-D-xylulose 5-phosphate: step 4/6. Functionally, involved in the biosynthesis of isopentenyl diphosphate (IPP) and dimethylallyl diphosphate (DMAPP), two major building blocks of isoprenoid compounds. Catalyzes the conversion of 4-diphosphocytidyl-2-C-methyl-D-erythritol 2-phosphate (CDP-ME2P) to 2-C-methyl-D-erythritol 2,4-cyclodiphosphate (ME-CPP) with a corresponding release of cytidine 5-monophosphate (CMP). This Ectopseudomonas mendocina (strain ymp) (Pseudomonas mendocina) protein is 2-C-methyl-D-erythritol 2,4-cyclodiphosphate synthase.